The following is a 224-amino-acid chain: Large ribosomal subunit protein uL1m (224 aa).

Belongs to the universal ribosomal protein uL1 family.

It is found in the mitochondrion. The polypeptide is Large ribosomal subunit protein uL1m (RPL1) (Reclinomonas americana).